A 932-amino-acid polypeptide reads, in one-letter code: MAPPQGKPENVLRLADELIALDQHSSALQSLHETIVLKRSRNAQGFSLEPIMMRFIELCVHLRKGKIAKEGLYTYKNAVQNTSVTAIENVVKHFIELANKRVQEAQEKADKISVEYVDDLEATETPESIMMSLVSGDLSKSRTDRALVTPWLKFLWDAYRTVLDILRNNARLEVMYQLIANSAFQFCLKYQRKTEFRRLCELLRSHLGNASKFSNAPHSINLNDAETMQRHLDMRFSQLNVAVELELWQEAFRSIEDIHSLLTFSKRAPAAVMLGNYYRKLIKIFLVCDNYLLHAAAWNRYFTFTNVQKPATANFVILSALSIPIIDANKLSGPSIEAEDAKSKNARLALLLNLSKTPTRETLIKDAISRGVLSFCDQAIRDLYQILEVEFHPLSICKKLQPIIKRLAESNDTAQYIRPLQQVILTRLFQQLSQVYDSISLKYVMDLATFEEPYDFNPGQIEKFIMNGNKKGAFSIRLNHIENSISFSSDLFSNPIKSSDSVSLQSTPSELITSQLTRIAKSLSSVLMRFDTDFCLLRKQQAEAAYERAQAGVEQERKAVIAQRSLLELRRGQADTLATQREAELAAQRALKQKQESEAESLRVQEEINKRNAERIRREKEAIRINEAKKLAEELKAKGGLEVNAEDLEHLDADKLRAMQIEQVEKQNKSMNERLRVIGKRIDHLERAYRREAIPLWEEDAKQQAEHDREIFYEREKQRKEVQERKHEQAIKDKKAFAQFASYIHAYKQNIDDERDKAYQEAYAKAKNVIDAERERQRKEIFEQKLAEAIREAEEEAARAAEEEANRELHEQEEAQKRAIEERTRAAREAKEREQREMAEKLERQRRIQQERDEEISRKLAEKAAARRANIGASSPSPGAWRRGGASAGGVSRDSPRYSRGGYSRGSVPPRETLAPSKGAYVPPSRRNQQQQ.

In terms of domain architecture, PCI spans 309–492; the sequence is KPATANFVIL…NSISFSSDLF (184 aa). Ser374 and Ser501 each carry phosphoserine. Positions 537–862 form a coiled coil; that stretch reads LRKQQAEAAY…DEEISRKLAE (326 aa). Residues 793–865 show a composition bias toward basic and acidic residues; that stretch reads AEEEAARAAE…ISRKLAEKAA (73 aa). A disordered region spans residues 793-932; sequence AEEEAARAAE…PPSRRNQQQQ (140 aa). Residues Ser874, Ser875, and Ser877 each carry the phosphoserine modification. Positions 877-893 are enriched in low complexity; sequence SPGAWRRGGASAGGVSR.

This sequence belongs to the eIF-3 subunit A family. Component of the eukaryotic translation initiation factor 3 (eIF-3) complex. The eIF-3 complex appears to include tif32/eif3a, SPAC25G10.08/eif3b, tif33/eif3c, SPBC4C3.07/eif3f, tif35/eif3g and sum1/eif3i. This set of common subunits may also associate exclusively with either moe1/eif3d and int6/eif3e, or with SPAC821.05/eif3h and SPAC1751.03/eif3m. The eIF-3 complex may also include SPAC3A12.13c/eif3j.

It localises to the cytoplasm. In terms of biological role, RNA-binding component of the eukaryotic translation initiation factor 3 (eIF-3) complex, which is involved in protein synthesis of a specialized repertoire of mRNAs and, together with other initiation factors, stimulates binding of mRNA and methionyl-tRNAi to the 40S ribosome. The eIF-3 complex specifically targets and initiates translation of a subset of mRNAs involved in cell proliferation. The chain is Eukaryotic translation initiation factor 3 subunit A (tif32) from Schizosaccharomyces pombe (strain 972 / ATCC 24843) (Fission yeast).